Here is a 198-residue protein sequence, read N- to C-terminus: Probable host range protein 2 (198 aa).

Residues 171–198 (SDDDDDNDNADDDEEDDDEVNDIEDDYE) form a disordered region.

This sequence belongs to the poxviridae C7 protein family.

In terms of biological role, plays a role for multiplication of the virus in different cell types. In Bos taurus (Bovine), this protein is Probable host range protein 2.